The sequence spans 204 residues: MVQSYEDMLKAAYSGIGEPTETGERFVMPKAKIYIEGKTTVLENFSDIVDSLNRDKDHFMKFILGELGTAGKIDGNRAVFNGKFEQAQFDAILETYVGDYVICSECGRPDTKLVKDDRVLMLLCEACGSKRPIRKRKAKTEVQGPAIEEGKELEVHIESISKKGDGVARIGKYILYVAGTKAGQNVKVRITRISGQVAFTQKIL.

A TRAM domain is found at Ala-146 to Leu-204.

It belongs to the eIF-2-beta/eIF-5 family. In terms of assembly, heterotrimer composed of an alpha, a beta and a gamma chain.

In terms of biological role, eIF-2 functions in the early steps of protein synthesis by forming a ternary complex with GTP and initiator tRNA. In Methanocorpusculum labreanum (strain ATCC 43576 / DSM 4855 / Z), this protein is Translation initiation factor 2 subunit beta.